Here is a 249-residue protein sequence, read N- to C-terminus: Octanoyltransferase (249 aa).

Residues 53-234 (PDTDDEIWVV…RLIAHLDGAT (182 aa)) enclose the BPL/LPL catalytic domain. Substrate-binding positions include 93–100 (RGGQITYH), 165–167 (ALG), and 178–180 (GLS). Cysteine 196 serves as the catalytic Acyl-thioester intermediate.

Belongs to the LipB family.

It localises to the cytoplasm. The enzyme catalyses octanoyl-[ACP] + L-lysyl-[protein] = N(6)-octanoyl-L-lysyl-[protein] + holo-[ACP] + H(+). Its pathway is protein modification; protein lipoylation via endogenous pathway; protein N(6)-(lipoyl)lysine from octanoyl-[acyl-carrier-protein]: step 1/2. In terms of biological role, catalyzes the transfer of endogenously produced octanoic acid from octanoyl-acyl-carrier-protein onto the lipoyl domains of lipoate-dependent enzymes. Lipoyl-ACP can also act as a substrate although octanoyl-ACP is likely to be the physiological substrate. The polypeptide is Octanoyltransferase (Burkholderia mallei (strain NCTC 10247)).